The primary structure comprises 102 residues: Small ribosomal subunit protein uS10 (102 aa).

This sequence belongs to the universal ribosomal protein uS10 family. Part of the 30S ribosomal subunit.

In terms of biological role, involved in the binding of tRNA to the ribosomes. The sequence is that of Small ribosomal subunit protein uS10 from Methylocella silvestris (strain DSM 15510 / CIP 108128 / LMG 27833 / NCIMB 13906 / BL2).